The sequence spans 288 residues: Shikimate dehydrogenase (NADP(+)) (288 aa).

Shikimate contacts are provided by residues 21–23 (SLS) and Thr-68. Residue Lys-72 is the Proton acceptor of the active site. Residues Asn-93 and Asp-108 each contribute to the shikimate site. NADP(+) is bound by residues 132–136 (GNGGA) and Leu-230. Tyr-232 provides a ligand contact to shikimate. Gly-253 contacts NADP(+).

This sequence belongs to the shikimate dehydrogenase family. Homodimer.

The enzyme catalyses shikimate + NADP(+) = 3-dehydroshikimate + NADPH + H(+). It functions in the pathway metabolic intermediate biosynthesis; chorismate biosynthesis; chorismate from D-erythrose 4-phosphate and phosphoenolpyruvate: step 4/7. Functionally, involved in the biosynthesis of the chorismate, which leads to the biosynthesis of aromatic amino acids. Catalyzes the reversible NADPH linked reduction of 3-dehydroshikimate (DHSA) to yield shikimate (SA). The sequence is that of Shikimate dehydrogenase (NADP(+)) from Crocosphaera subtropica (strain ATCC 51142 / BH68) (Cyanothece sp. (strain ATCC 51142)).